The primary structure comprises 244 residues: Protein crossbronx (244 aa).

The UBC core domain maps to 20 to 176 (QQEYKILAEY…VQENIKESKE (157 aa)). Residues 209-244 (AGRSKQTEPSAQQGNGGHATGLSWVKEGEFKPLSIE) are disordered.

Belongs to the ubiquitin-conjugating enzyme family. FTS subfamily.

The protein is Protein crossbronx (cbx) of Drosophila simulans (Fruit fly).